Reading from the N-terminus, the 1270-residue chain is DNA-directed RNA polymerase subunit beta (1270 aa).

This sequence belongs to the RNA polymerase beta chain family. In terms of assembly, the RNAP catalytic core consists of 2 alpha, 1 beta, 1 beta' and 1 omega subunit. When a sigma factor is associated with the core the holoenzyme is formed, which can initiate transcription.

The enzyme catalyses RNA(n) + a ribonucleoside 5'-triphosphate = RNA(n+1) + diphosphate. Its function is as follows. DNA-dependent RNA polymerase catalyzes the transcription of DNA into RNA using the four ribonucleoside triphosphates as substrates. This Flavobacterium johnsoniae (strain ATCC 17061 / DSM 2064 / JCM 8514 / BCRC 14874 / CCUG 350202 / NBRC 14942 / NCIMB 11054 / UW101) (Cytophaga johnsonae) protein is DNA-directed RNA polymerase subunit beta.